The chain runs to 111 residues: Ribonuclease P protein component (111 aa).

Belongs to the RnpA family. Consists of a catalytic RNA component (M1 or rnpB) and a protein subunit.

It catalyses the reaction Endonucleolytic cleavage of RNA, removing 5'-extranucleotides from tRNA precursor.. RNaseP catalyzes the removal of the 5'-leader sequence from pre-tRNA to produce the mature 5'-terminus. It can also cleave other RNA substrates such as 4.5S RNA. The protein component plays an auxiliary but essential role in vivo by binding to the 5'-leader sequence and broadening the substrate specificity of the ribozyme. The protein is Ribonuclease P protein component of Streptococcus thermophilus (strain ATCC BAA-491 / LMD-9).